A 239-amino-acid polypeptide reads, in one-letter code: Protein GrpE (239 aa).

2 disordered regions span residues 1–56 (MIEN…KNTI) and 208–239 (SMGP…SEDV). Residues 40–53 (TSQKKEAINTEELK) are compositionally biased toward basic and acidic residues. The span at 224-239 (TVEEDVNSEVNTSEDV) shows a compositional bias: acidic residues.

It belongs to the GrpE family. As to quaternary structure, homodimer.

The protein resides in the cytoplasm. Functionally, participates actively in the response to hyperosmotic and heat shock by preventing the aggregation of stress-denatured proteins, in association with DnaK and GrpE. It is the nucleotide exchange factor for DnaK and may function as a thermosensor. Unfolded proteins bind initially to DnaJ; upon interaction with the DnaJ-bound protein, DnaK hydrolyzes its bound ATP, resulting in the formation of a stable complex. GrpE releases ADP from DnaK; ATP binding to DnaK triggers the release of the substrate protein, thus completing the reaction cycle. Several rounds of ATP-dependent interactions between DnaJ, DnaK and GrpE are required for fully efficient folding. The protein is Protein GrpE of Prochlorococcus marinus (strain MIT 9215).